A 198-amino-acid chain; its full sequence is Recombination protein RecR (198 aa).

Residues 57–72 (CSVCCNLTDQDPCQIC) form a C4-type zinc finger. The 96-residue stretch at 80-175 (STICVVQEPR…KVTRIARGLP (96 aa)) folds into the Toprim domain.

The protein belongs to the RecR family.

May play a role in DNA repair. It seems to be involved in an RecBC-independent recombinational process of DNA repair. It may act with RecF and RecO. The sequence is that of Recombination protein RecR from Symbiobacterium thermophilum (strain DSM 24528 / JCM 14929 / IAM 14863 / T).